Reading from the N-terminus, the 435-residue chain is GTPase Der (435 aa).

EngA-type G domains lie at 4–167 (GIVA…PSHE) and 175–350 (TRVS…TALD). Residues 10–17 (GRPNVGKS), 57–61 (DTGGI), 119–122 (NKYD), 181–188 (GRPNVGKS), 228–232 (DTAGI), and 293–296 (NKWD) contribute to the GTP site. The KH-like domain maps to 351-435 (KKIKTSVFNE…PMSIIFRERK (85 aa)).

The protein belongs to the TRAFAC class TrmE-Era-EngA-EngB-Septin-like GTPase superfamily. EngA (Der) GTPase family. Associates with the 50S ribosomal subunit.

Functionally, GTPase that plays an essential role in the late steps of ribosome biogenesis. The sequence is that of GTPase Der from Mesoplasma florum (strain ATCC 33453 / NBRC 100688 / NCTC 11704 / L1) (Acholeplasma florum).